A 116-amino-acid chain; its full sequence is PTS system N,N'-diacetylchitobiose-specific EIIA component (116 aa).

The region spanning 15–113 is the PTS EIIA type-3 domain; the sequence is EELEEVVMGL…ITELIELHEK (99 aa). Histidine 89 serves as the catalytic Tele-phosphohistidine intermediate. At histidine 89 the chain carries Phosphohistidine; by HPr.

In terms of assembly, forms a complex with ChbB (EIIB). ChbA is a homotrimer. It depends on Mg(2+) as a cofactor.

It localises to the cytoplasm. The phosphoenolpyruvate-dependent sugar phosphotransferase system (sugar PTS), a major carbohydrate active transport system, catalyzes the phosphorylation of incoming sugar substrates concomitantly with their translocation across the cell membrane. The enzyme II ChbABC PTS system is involved in the transport of the chitin disaccharide N,N'-diacetylchitobiose (GlcNAc2). This Escherichia coli O157:H7 protein is PTS system N,N'-diacetylchitobiose-specific EIIA component (chbA).